Consider the following 241-residue polypeptide: Probable transcriptional regulatory protein LHK_02347 (241 aa).

It belongs to the TACO1 family.

The protein resides in the cytoplasm. This Laribacter hongkongensis (strain HLHK9) protein is Probable transcriptional regulatory protein LHK_02347.